A 1697-amino-acid chain; its full sequence is Histone acetyltransferase HAC1 (1697 aa).

Residues 1-16 (MNVQAHMSGQVSNQGT) are compositionally biased toward polar residues. 6 disordered regions span residues 1-45 (MNVQ…LGPS), 202-221 (SNFGLGSGGNMSSMSSQRNT), 385-439 (SFQA…QQQR), 555-574 (HWQSQSQEHTQMSNSMSNER), 583-631 (RMSG…GNRD), and 843-901 (IGIA…GKPE). Composition is skewed to low complexity over residues 17-28 (MSQQNGNSQMQN) and 202-217 (SNFGLGSGGNMSSMSS). Residues 385 to 398 (SFQAVSRTSSSLSH) are compositionally biased toward polar residues. A compositionally biased stretch (low complexity) spans 399–439 (QQQQFQQQPNRFQQQPNQFHQQQQQFLHQQQLKQQSQQQQR). Composition is skewed to polar residues over residues 556–571 (WQSQSQEHTQMSNSMS) and 584–628 (MSGT…NGNG). The TAZ-type 1 zinc-finger motif lies at 629–709 (NRDPRFKNQQ…EPNCPVCIPV (81 aa)). The span at 873–901 (TKVEKEPESLKKENLAESTEHTSKSGKPE) shows a compositional bias: basic and acidic residues. The PHD-type zinc finger occupies 989 to 1066 (HYFCIPCYNE…EYTCPYCFIA (78 aa)). The 437-residue stretch at 1081–1517 (VLGAKDLPRT…VLYHLHNPTA (437 aa)) folds into the CBP/p300-type HAT domain. Residues 1204–1206 (LDS), 1223–1224 (RT), and tryptophan 1279 contribute to the acetyl-CoA site. 2 consecutive ZZ-type zinc fingers follow at residues 1399–1462 (HLQP…IMDI) and 1519–1572 (AFVT…SLAD). Zn(2+)-binding residues include cysteine 1404, cysteine 1407, cysteine 1419, cysteine 1422, cysteine 1428, cysteine 1431, histidine 1444, histidine 1452, cysteine 1524, cysteine 1527, cysteine 1539, cysteine 1542, cysteine 1548, cysteine 1551, histidine 1560, and histidine 1562. The segment at 1579–1662 (EARQLRVLQL…ECHVPRCRDL (84 aa)) adopts a TAZ-type 2 zinc-finger fold.

In terms of tissue distribution, rosette leaves, stems and flowers.

Its subcellular location is the nucleus. It carries out the reaction L-lysyl-[protein] + acetyl-CoA = N(6)-acetyl-L-lysyl-[protein] + CoA + H(+). In terms of biological role, acetyltransferase enzyme. Acetylates histones, giving a specific tag for transcriptional activation. This Arabidopsis thaliana (Mouse-ear cress) protein is Histone acetyltransferase HAC1 (HAC1).